Reading from the N-terminus, the 211-residue chain is Probable oligoribonuclease (211 aa).

In terms of domain architecture, Exonuclease spans 38 to 202; it reads IVWMDLEMTG…DDIRESIKEL (165 aa). Tyrosine 159 is a catalytic residue.

It belongs to the oligoribonuclease family.

3'-to-5' exoribonuclease specific for small oligoribonucleotides. The protein is Probable oligoribonuclease of Drosophila melanogaster (Fruit fly).